A 452-amino-acid polypeptide reads, in one-letter code: Disintegrin and metalloproteinase domain-containing protein 11 (452 aa).

Residues 1-120 (RRHHSPLLVS…GGGSCLFNKP (120 aa)) form the Peptidase M12B domain. Residues 1–417 (RRHHSPLLVS…EKYKGPSGTN (417 aa)) are Extracellular-facing. Cystine bridges form between cysteine 31-cysteine 115, cysteine 74-cysteine 99, and cysteine 76-cysteine 83. The region spanning 126-214 (PPSCGNGFIE…ACPANLHKQD (89 aa)) is the Disintegrin domain. Asparagine 149 carries N-linked (GlcNAc...) asparagine glycosylation. A disulfide bridge connects residues cysteine 186 and cysteine 206. 2 N-linked (GlcNAc...) asparagine glycosylation sites follow: asparagine 288 and asparagine 356. Cystine bridges form between cysteine 360–cysteine 375, cysteine 369–cysteine 381, and cysteine 383–cysteine 392. Positions 360–416 (CPGSWNGVICSDHGVCSNEGKCICHPEWTGKDCSVYDPLPVPKPTGVVEKYKGPSGT) constitute an EGF-like domain. A helical transmembrane segment spans residues 418-438 (IIIGSIAGAVLIAAIVLGGTG). Topologically, residues 439–452 (WGFKNIRRGRSGGG) are cytoplasmic.

Post-translationally, the precursor is cleaved by a furin endopeptidase. As to expression, detected in testis and barely expressed in heart and muscle. Not detectable in liver.

The protein resides in the presynaptic cell membrane. The protein localises to the perikaryon. It localises to the cell projection. Its subcellular location is the axon. Functionally, probable ligand for integrin in the brain. This is a non-catalytic metalloprotease-like protein. This chain is Disintegrin and metalloproteinase domain-containing protein 11 (adam11), found in Xenopus laevis (African clawed frog).